Consider the following 316-residue polypeptide: Putative phosphoribosylaminoimidazole-succinocarboxamide synthase 2 (316 aa).

Belongs to the SAICAR synthetase family.

The enzyme catalyses 5-amino-1-(5-phospho-D-ribosyl)imidazole-4-carboxylate + L-aspartate + ATP = (2S)-2-[5-amino-1-(5-phospho-beta-D-ribosyl)imidazole-4-carboxamido]succinate + ADP + phosphate + 2 H(+). It participates in purine metabolism; IMP biosynthesis via de novo pathway; 5-amino-1-(5-phospho-D-ribosyl)imidazole-4-carboxamide from 5-amino-1-(5-phospho-D-ribosyl)imidazole-4-carboxylate: step 1/2. This chain is Putative phosphoribosylaminoimidazole-succinocarboxamide synthase 2 (purC2), found in Agrobacterium fabrum (strain C58 / ATCC 33970) (Agrobacterium tumefaciens (strain C58)).